Reading from the N-terminus, the 392-residue chain is UPF0229 protein CPF_1540 (392 aa).

The segment at 75-100 (VTTGTGEERRGDRISSDKRKAISNNK) is disordered. Residues 80-94 (GEERRGDRISSDKRK) are compositionally biased toward basic and acidic residues.

This sequence belongs to the UPF0229 family.

The protein is UPF0229 protein CPF_1540 of Clostridium perfringens (strain ATCC 13124 / DSM 756 / JCM 1290 / NCIMB 6125 / NCTC 8237 / Type A).